Consider the following 705-residue polypeptide: Lethal(3)malignant brain tumor-like protein 2 (705 aa).

The interval methionine 1–glycine 84 is disordered. A Phosphoserine modification is found at serine 13. Residues proline 15–glutamate 25 show a composition bias toward acidic residues. Positions serine 38–glutamate 49 are enriched in low complexity. Over residues glutamate 50–glutamate 60 the composition is skewed to acidic residues. Serine 67 is modified (phosphoserine). Threonine 76 carries the post-translational modification Phosphothreonine. The FCS-type zinc-finger motif lies at aspartate 81–arginine 116. Residues cysteine 90, cysteine 93, cysteine 110, and cysteine 114 each contribute to the Zn(2+) site. MBT repeat units lie at residues phenylalanine 179–proline 283, threonine 291–serine 391, methionine 397–proline 500, and phenylalanine 508–proline 604. Position 338 is a phosphoserine (serine 338). Lysine 405 participates in a covalent cross-link: Glycyl lysine isopeptide (Lys-Gly) (interchain with G-Cter in SUMO2). Residues glutamate 608–valine 665 are disordered. The span at threonine 619–proline 634 shows a compositional bias: basic residues. Glycyl lysine isopeptide (Lys-Gly) (interchain with G-Cter in SUMO2) cross-links involve residues lysine 647, lysine 659, and lysine 675. The segment at aspartate 680 to aspartate 705 is disordered. Serine 683, serine 688, and serine 689 each carry phosphoserine. A Glycyl lysine isopeptide (Lys-Gly) (interchain with G-Cter in SUMO1); alternate cross-link involves residue lysine 700. Lysine 700 is covalently cross-linked (Glycyl lysine isopeptide (Lys-Gly) (interchain with G-Cter in SUMO2); alternate).

As to quaternary structure, part of the E2F6.com-1 complex in G0 phase composed of E2F6, MGA, MAX, TFDP1, CBX3, BAT8, EUHMTASE1, RING1, RNF2, MBLR, BAT8 and YAF2.

It localises to the nucleus. Putative Polycomb group (PcG) protein. PcG proteins maintain the transcriptionally repressive state of genes, probably via a modification of chromatin, rendering it heritably changed in its expressibility. Its association with a chromatin-remodeling complex suggests that it may contribute to prevent expression of genes that trigger the cell into mitosis. Binds to monomethylated and dimethylated 'Lys-20' on histone H4. Binds histone H3 peptides that are monomethylated or dimethylated on 'Lys-4', 'Lys-9' or 'Lys-27'. The protein is Lethal(3)malignant brain tumor-like protein 2 (L3MBTL2) of Homo sapiens (Human).